A 295-amino-acid chain; its full sequence is UDP-3-O-acyl-N-acetylglucosamine deacetylase (295 aa).

Zn(2+) is bound by residues His77, His233, and Asp237. The active-site Proton donor is the His260.

Belongs to the LpxC family. Zn(2+) is required as a cofactor.

It catalyses the reaction a UDP-3-O-[(3R)-3-hydroxyacyl]-N-acetyl-alpha-D-glucosamine + H2O = a UDP-3-O-[(3R)-3-hydroxyacyl]-alpha-D-glucosamine + acetate. It functions in the pathway glycolipid biosynthesis; lipid IV(A) biosynthesis; lipid IV(A) from (3R)-3-hydroxytetradecanoyl-[acyl-carrier-protein] and UDP-N-acetyl-alpha-D-glucosamine: step 2/6. Catalyzes the hydrolysis of UDP-3-O-myristoyl-N-acetylglucosamine to form UDP-3-O-myristoylglucosamine and acetate, the committed step in lipid A biosynthesis. This chain is UDP-3-O-acyl-N-acetylglucosamine deacetylase, found in Solibacter usitatus (strain Ellin6076).